The following is a 65-amino-acid chain: Large ribosomal subunit protein bL35 (65 aa).

Belongs to the bacterial ribosomal protein bL35 family.

This Chlorobium phaeovibrioides (strain DSM 265 / 1930) (Prosthecochloris vibrioformis (strain DSM 265)) protein is Large ribosomal subunit protein bL35.